The sequence spans 285 residues: Bifunctional protein FolD (285 aa).

Residues 165–167 (GRS) and serine 190 each bind NADP(+).

This sequence belongs to the tetrahydrofolate dehydrogenase/cyclohydrolase family. As to quaternary structure, homodimer.

The catalysed reaction is (6R)-5,10-methylene-5,6,7,8-tetrahydrofolate + NADP(+) = (6R)-5,10-methenyltetrahydrofolate + NADPH. The enzyme catalyses (6R)-5,10-methenyltetrahydrofolate + H2O = (6R)-10-formyltetrahydrofolate + H(+). The protein operates within one-carbon metabolism; tetrahydrofolate interconversion. In terms of biological role, catalyzes the oxidation of 5,10-methylenetetrahydrofolate to 5,10-methenyltetrahydrofolate and then the hydrolysis of 5,10-methenyltetrahydrofolate to 10-formyltetrahydrofolate. The protein is Bifunctional protein FolD of Ligilactobacillus salivarius (strain UCC118) (Lactobacillus salivarius).